The sequence spans 511 residues: Probable Xaa-Pro aminopeptidase MAA_08947 (511 aa).

Residues aspartate 275, aspartate 286, glutamate 439, and glutamate 480 each contribute to the Mn(2+) site.

It belongs to the peptidase M24B family. Mn(2+) is required as a cofactor.

It catalyses the reaction Release of any N-terminal amino acid, including proline, that is linked to proline, even from a dipeptide or tripeptide.. Functionally, catalyzes the removal of a penultimate prolyl residue from the N-termini of peptides. The chain is Probable Xaa-Pro aminopeptidase MAA_08947 from Metarhizium robertsii (strain ARSEF 23 / ATCC MYA-3075) (Metarhizium anisopliae (strain ARSEF 23)).